Here is an 86-residue protein sequence, read N- to C-terminus: UPF0297 protein CA_C1679 (86 aa).

Belongs to the UPF0297 family.

The protein is UPF0297 protein CA_C1679 of Clostridium acetobutylicum (strain ATCC 824 / DSM 792 / JCM 1419 / IAM 19013 / LMG 5710 / NBRC 13948 / NRRL B-527 / VKM B-1787 / 2291 / W).